The primary structure comprises 78 residues: Small ribosomal subunit protein bS16c (78 aa).

This sequence belongs to the bacterial ribosomal protein bS16 family.

The protein localises to the plastid. The protein resides in the chloroplast. In Amborella trichopoda, this protein is Small ribosomal subunit protein bS16c.